A 346-amino-acid polypeptide reads, in one-letter code: 3-keto-steroid reductase ERG27 (346 aa).

Leu19, Thr42, and Lys48 together coordinate NADP(+). Catalysis depends on proton donor residues Ser182 and Tyr205. NADP(+) contacts are provided by Tyr205, Lys209, and Ser241. The active-site Lowers pKa of active site Tyr is Lys209. Residues 242–262 (FSFFQYLNVFTYYGMLFLFYL) traverse the membrane as a helical segment. N-linked (GlcNAc...) asparagine glycosylation is present at Asn272.

This sequence belongs to the short-chain dehydrogenases/reductases (SDR) family. ERG27 subfamily. In terms of assembly, heterotetramer of ERG25, ERG26, ERG27 and ERG28. ERG28 acts as a scaffold to tether ERG27 and other 4,4-demethylation-related enzymes, forming a demethylation enzyme complex, in the endoplasmic reticulum. Interacts with ERG25 and ERG28. Also interacts with ERG7, but only in lipid particles.

It is found in the endoplasmic reticulum membrane. It localises to the lipid droplet. It carries out the reaction 3-dehydro-4alpha-methylzymosterol + NADPH + H(+) = 4alpha-methylzymosterol + NADP(+). It functions in the pathway steroid biosynthesis; zymosterol biosynthesis; zymosterol from lanosterol: step 5/6. In terms of biological role, 3-keto-steroid reductase; part of the third module of ergosterol biosynthesis pathway that includes the late steps of the pathway. ERG27 is a catalytic component of the C-4 demethylation complex that catalyzes the reduction of the keto group on the C-3. The third module or late pathway involves the ergosterol synthesis itself through consecutive reactions that mainly occur in the endoplasmic reticulum (ER) membrane. Firstly, the squalene synthase ERG9 catalyzes the condensation of 2 farnesyl pyrophosphate moieties to form squalene, which is the precursor of all steroids. Squalene synthase is crucial for balancing the incorporation of farnesyl diphosphate (FPP) into sterol and nonsterol isoprene synthesis. Secondly, the squalene epoxidase ERG1 catalyzes the stereospecific oxidation of squalene to (S)-2,3-epoxysqualene, which is considered to be a rate-limiting enzyme in steroid biosynthesis. Then, the lanosterol synthase ERG7 catalyzes the cyclization of (S)-2,3 oxidosqualene to lanosterol, a reaction that forms the sterol core. In the next steps, lanosterol is transformed to zymosterol through a complex process involving various demethylation, reduction and desaturation reactions. The lanosterol 14-alpha-demethylase ERG11 (also known as CYP51) catalyzes C14-demethylation of lanosterol to produce 4,4'-dimethyl cholesta-8,14,24-triene-3-beta-ol, which is critical for ergosterol biosynthesis. The C-14 reductase ERG24 reduces the C14=C15 double bond of 4,4-dimethyl-cholesta-8,14,24-trienol to produce 4,4-dimethyl-cholesta-8,24-dienol. 4,4-dimethyl-cholesta-8,24-dienol is substrate of the C-4 demethylation complex ERG25-ERG26-ERG27 in which ERG25 catalyzes the three-step monooxygenation required for the demethylation of 4,4-dimethyl and 4alpha-methylsterols, ERG26 catalyzes the oxidative decarboxylation that results in a reduction of the 3-beta-hydroxy group at the C-3 carbon to an oxo group, and ERG27 is responsible for the reduction of the keto group on the C-3. ERG28 has a role as a scaffold to help anchor ERG25, ERG26 and ERG27 to the endoplasmic reticulum and ERG29 regulates the activity of the iron-containing C4-methylsterol oxidase ERG25. Then, the sterol 24-C-methyltransferase ERG6 catalyzes the methyl transfer from S-adenosyl-methionine to the C-24 of zymosterol to form fecosterol. The C-8 sterol isomerase ERG2 catalyzes the reaction which results in unsaturation at C-7 in the B ring of sterols and thus converts fecosterol to episterol. The sterol-C5-desaturase ERG3 then catalyzes the introduction of a C-5 double bond in the B ring to produce 5-dehydroepisterol. The C-22 sterol desaturase ERG5 further converts 5-dehydroepisterol into ergosta-5,7,22,24(28)-tetraen-3beta-ol by forming the C-22(23) double bond in the sterol side chain. Finally, ergosta-5,7,22,24(28)-tetraen-3beta-ol is substrate of the C-24(28) sterol reductase ERG4 to produce ergosterol. Functionally, facilitates the association of ERG7 with lipid particles preventing its digestion in the endoplasmic reticulum and the lipid particles. The polypeptide is 3-keto-steroid reductase ERG27 (Candida albicans (strain SC5314 / ATCC MYA-2876) (Yeast)).